The primary structure comprises 206 residues: Octanoyltransferase (206 aa).

The BPL/LPL catalytic domain occupies 30–206 (PETNDEIWLV…EFVTLLNNSI (177 aa)). Substrate is bound by residues 69-76 (RGGQVTYH), 137-139 (SLG), and 150-152 (GIA). Residue cysteine 168 is the Acyl-thioester intermediate of the active site.

Belongs to the LipB family.

The protein localises to the cytoplasm. The catalysed reaction is octanoyl-[ACP] + L-lysyl-[protein] = N(6)-octanoyl-L-lysyl-[protein] + holo-[ACP] + H(+). The protein operates within protein modification; protein lipoylation via endogenous pathway; protein N(6)-(lipoyl)lysine from octanoyl-[acyl-carrier-protein]: step 1/2. In terms of biological role, catalyzes the transfer of endogenously produced octanoic acid from octanoyl-acyl-carrier-protein onto the lipoyl domains of lipoate-dependent enzymes. Lipoyl-ACP can also act as a substrate although octanoyl-ACP is likely to be the physiological substrate. In Francisella tularensis subsp. tularensis (strain FSC 198), this protein is Octanoyltransferase.